The chain runs to 432 residues: Putative D-alanyl-D-alanine carboxypeptidase (432 aa).

Residues 7-25 (ATVLLTFSLSAFAVEYPVL) traverse the membrane as a helical; Signal-anchor segment.

The protein belongs to the peptidase S12 family. YfeW subfamily.

Its subcellular location is the cell inner membrane. The catalysed reaction is Preferential cleavage: (Ac)2-L-Lys-D-Ala-|-D-Ala. Also transpeptidation of peptidyl-alanyl moieties that are N-acyl substituents of D-alanine.. The protein is Putative D-alanyl-D-alanine carboxypeptidase of Salmonella gallinarum (strain 287/91 / NCTC 13346).